Here is a 546-residue protein sequence, read N- to C-terminus: Chaperonin GroEL 2 (546 aa).

ATP contacts are provided by residues 30-33 (TLGP), K51, 87-91 (DGTTT), G415, 479-481 (NAA), and D495. Residues 524–546 (APKDAPPAAPAGVPGAGGPGFDF) form a disordered region. A compositionally biased stretch (gly residues) spans 537 to 546 (PGAGGPGFDF).

This sequence belongs to the chaperonin (HSP60) family. As to quaternary structure, forms a cylinder of 14 subunits composed of two heptameric rings stacked back-to-back. Interacts with the co-chaperonin GroES.

The protein resides in the cytoplasm. The catalysed reaction is ATP + H2O + a folded polypeptide = ADP + phosphate + an unfolded polypeptide.. In terms of biological role, together with its co-chaperonin GroES, plays an essential role in assisting protein folding. The GroEL-GroES system forms a nano-cage that allows encapsulation of the non-native substrate proteins and provides a physical environment optimized to promote and accelerate protein folding. The protein is Chaperonin GroEL 2 of Burkholderia pseudomallei (strain 1710b).